A 79-amino-acid polypeptide reads, in one-letter code: MSSKIKFVALLIVVISLLLNNAQSTREILSAEICGWNDPAVHCKTKEDCFEKCGGRPAKKVFCVRPGDHSYDRLCCCRA.

A signal peptide spans 1–24 (MSSKIKFVALLIVVISLLLNNAQS). 4 disulfides stabilise this stretch: cysteine 34–cysteine 77, cysteine 43–cysteine 63, cysteine 49–cysteine 75, and cysteine 53–cysteine 76.

Belongs to the DEFL family.

The protein resides in the secreted. This Arabidopsis thaliana (Mouse-ear cress) protein is Defensin-like protein 272.